The following is a 212-amino-acid chain: ATP phosphoribosyltransferase (212 aa).

Belongs to the ATP phosphoribosyltransferase family. Short subfamily. As to quaternary structure, heteromultimer composed of HisG and HisZ subunits.

It localises to the cytoplasm. The enzyme catalyses 1-(5-phospho-beta-D-ribosyl)-ATP + diphosphate = 5-phospho-alpha-D-ribose 1-diphosphate + ATP. The protein operates within amino-acid biosynthesis; L-histidine biosynthesis; L-histidine from 5-phospho-alpha-D-ribose 1-diphosphate: step 1/9. Functionally, catalyzes the condensation of ATP and 5-phosphoribose 1-diphosphate to form N'-(5'-phosphoribosyl)-ATP (PR-ATP). Has a crucial role in the pathway because the rate of histidine biosynthesis seems to be controlled primarily by regulation of HisG enzymatic activity. The polypeptide is ATP phosphoribosyltransferase (Albidiferax ferrireducens (strain ATCC BAA-621 / DSM 15236 / T118) (Rhodoferax ferrireducens)).